The chain runs to 213 residues: Ribosomal RNA small subunit methyltransferase G (213 aa).

Residues Gly-81, Leu-86, 132-133 (VE), and Arg-147 each bind S-adenosyl-L-methionine.

The protein belongs to the methyltransferase superfamily. RNA methyltransferase RsmG family.

It localises to the cytoplasm. The enzyme catalyses guanosine(527) in 16S rRNA + S-adenosyl-L-methionine = N(7)-methylguanosine(527) in 16S rRNA + S-adenosyl-L-homocysteine. Functionally, specifically methylates the N7 position of guanine in position 527 of 16S rRNA. The chain is Ribosomal RNA small subunit methyltransferase G from Mannheimia succiniciproducens (strain KCTC 0769BP / MBEL55E).